A 483-amino-acid chain; its full sequence is Type 2 glycosyltransferase (483 aa).

The chain crosses the membrane as a helical span at residues 21–41; it reads AVVYLSALFTPWFTAFCVLWL. The Dxd motif signature appears at 156 to 158; the sequence is DDD. The QxxxRW motif signature appears at 301–305; that stretch reads QCSRW. A glycan (N-linked (GlcNAc...) asparagine) is linked at asparagine 313. 3 helical membrane passes run 336 to 356, 369 to 389, and 396 to 416; these read IATF…ALWW, AIYA…VGLF, and IMFL…KIYA. N-linked (GlcNAc...) asparagine glycosylation occurs at asparagine 421.

It belongs to the GT2 glycosyltransferase family.

The protein localises to the cell membrane. In terms of biological role, glycosyltransferase that plays an important role in infection-related morphogenesis and pathogenesis. Involved in stress tolerance and hyphal hydrophobicity via its regulation of the expression of nydrophobin MPG1. May regulate growth, pathogenicity, and cell wall integrity (CWI) through glycosylation of heat shock protein SSB1, and other (unidentified) substrates may contribute to conidiation. Candidate proteins as potential substrates of GT2 include several heat shock proteins (SSB1/MGG_02503, MGG_06759 and MGG_06958), two coiled-coil domain-containing proteins (MGG_04321 and MGG_09571), aminopeptidase 2 (MGG_16472), and a nuclease domain-containing protein (MGG_12646). The polypeptide is Type 2 glycosyltransferase (Pyricularia oryzae (strain 70-15 / ATCC MYA-4617 / FGSC 8958) (Rice blast fungus)).